We begin with the raw amino-acid sequence, 1233 residues long: Capping protein-inhibiting regulator of actin dynamics (1233 aa).

3 positions are modified to phosphoserine: serine 7, serine 28, and serine 132. Disordered regions lie at residues 92–136, 157–224, and 269–527; these read AENK…SAGT, AKHK…RRRQ, and LLEE…WQEV. The span at 157–176 shows a compositional bias: basic residues; that stretch reads AKHKLAVKPKKQRVSKKHRR. 4 stretches are compositionally biased toward basic and acidic residues: residues 200–211, 282–293, 302–322, and 329–362; these read PGEDKPTWHEEE, EAERAPREEQQR, DAER…ERRR, and AEER…KRQE. Residues 321–472 are required for interaction with actin-capping proteins; sequence RRLQAQAQAE…EQQGRSGDFQ (152 aa). 2 stretches are compositionally biased toward acidic residues: residues 363–376 and 397–407; these read EEEA…EQQE and EEEDLGEEEEE. At serine 420 the chain carries Phosphoserine. Composition is skewed to basic and acidic residues over residues 432-447 and 505-527; these read DQER…HSEE and VERK…WQEV. Residue serine 556 is modified to Phosphoserine. Phosphothreonine is present on threonine 559. Disordered stretches follow at residues 560–586, 629–788, 815–1082, and 1097–1186; these read PAKD…HALP, HAEA…TTEG, EFTT…TEKV, and QKGF…ISDS. The span at 677–707 shows a compositional bias: basic and acidic residues; that stretch reads KNAESDPRSSERDQLRPGDESTPRGRCDSRG. Residues 732–742 are compositionally biased toward polar residues; that stretch reads GTETSKQSTEA. A compositionally biased stretch (basic and acidic residues) spans 768–783; sequence ELGKGPEKSEMHREPA. Composition is skewed to polar residues over residues 815 to 825 and 852 to 863; these read EFTTSSDSETA and TNYSLRFNCDQQ. Residues 876–889 are compositionally biased toward low complexity; it reads GDSADAGPPAAGSA. Residues 908-921 show a composition bias toward basic and acidic residues; the sequence is QERKQAPSTRRDSA. Residues 956–967 show a composition bias toward low complexity; that stretch reads PLAQKPALAPKP. At threonine 971 the chain carries Phosphothreonine. Residues serine 975 and serine 1017 each carry the phosphoserine modification. Residues 994–1040 show a composition bias toward basic and acidic residues; sequence GRPDPEPSEPSKEDQESSDRRPPSPPGPEERKGQKRDEEEEATERKP. Residues 1047–1057 show a composition bias toward polar residues; sequence ATQQEKPSQTP. 2 stretches are compositionally biased toward basic and acidic residues: residues 1059–1082 and 1099–1124; these read AGRK…TEKV and GFRE…KLSK. Positions 1127–1139 are enriched in low complexity; that stretch reads VSVSVQPGSSSVS. Residues 1151–1170 are compositionally biased toward basic and acidic residues; that stretch reads PEEKRPETAVSRLERREQLK. A compositionally biased stretch (polar residues) spans 1174-1183; that stretch reads TLPTSVTVEI.

As to quaternary structure, directly interacts with actin-capping proteins CAPZA1, CAPZA2 and CAPZB; this interaction decreases the binding of capping proteins to actin. In terms of tissue distribution, expressed in intestinal epithelial cells (at protein level).

Its subcellular location is the cytoplasm. The protein localises to the cytosol. Functionally, involved in epithelial cell integrity by acting on the maintenance of the actin cytoskeleton. Positively regulates the actin polymerization, by inhibiting the interaction of actin-capping proteins with actin. This chain is Capping protein-inhibiting regulator of actin dynamics, found in Homo sapiens (Human).